We begin with the raw amino-acid sequence, 292 residues long: Ribosomal protein L11 methyltransferase (292 aa).

Residues threonine 144, glycine 165, aspartate 187, and asparagine 229 each coordinate S-adenosyl-L-methionine.

This sequence belongs to the methyltransferase superfamily. PrmA family.

It is found in the cytoplasm. The enzyme catalyses L-lysyl-[protein] + 3 S-adenosyl-L-methionine = N(6),N(6),N(6)-trimethyl-L-lysyl-[protein] + 3 S-adenosyl-L-homocysteine + 3 H(+). Functionally, methylates ribosomal protein L11. The chain is Ribosomal protein L11 methyltransferase from Pseudomonas putida (strain GB-1).